A 329-amino-acid polypeptide reads, in one-letter code: NAC domain-containing protein 71 (329 aa).

The NAC domain occupies 9 to 166 (LPPGFRFHPT…DWVLCRIYNK (158 aa)). The disordered stretch occupies residues 228-281 (RSGSADRDSMPRLHTDSSGSEHVLSPSPSPDDFPGGGDHDYAESQPSGGCGGWP). Residues 230 to 242 (GSADRDSMPRLHT) are compositionally biased toward basic and acidic residues.

Interacts with NAC048 and NAC002. In terms of tissue distribution, expressed in roots and embryo. Weakly expressed in callus.

It localises to the nucleus. Functionally, transcription activator that binds to the promoter of the stress response gene LEA19. Involved in tolerance to abiotic stresses. This is NAC domain-containing protein 71 from Oryza sativa subsp. japonica (Rice).